The chain runs to 244 residues: Isoprenyl transferase (244 aa).

Asp-23 is a catalytic residue. Asp-23 serves as a coordination point for Mg(2+). Substrate is bound by residues 24–27 (GNGR), Trp-28, Arg-36, His-40, and 68–70 (STE). Asn-71 (proton acceptor) is an active-site residue. Substrate-binding positions include Trp-72, Arg-74, Arg-191, and 197 to 199 (RMS). Glu-210 lines the Mg(2+) pocket.

It belongs to the UPP synthase family. Homodimer. It depends on Mg(2+) as a cofactor.

In terms of biological role, catalyzes the condensation of isopentenyl diphosphate (IPP) with allylic pyrophosphates generating different type of terpenoids. In Lactococcus lactis subsp. lactis (strain IL1403) (Streptococcus lactis), this protein is Isoprenyl transferase.